The primary structure comprises 234 residues: MIKSKFIVIEGLEGSGKTNAISKIVNLLNKQGIKNVIFTREPGGTPLAESLRTLIKEGVGYEKITDNAELLMIYAARIQLVESVIKPALENGSWVVGDRHDLSSLAYQGGGRKIDTKILKMLREVFLRDFYPDLTFYLDIPPIMGLARIRARATVRAQIRDKVNKIKRNHSHDIKNALDRIEVEPISFFDRTRKKYKELASKNEKIITIDASKSLELVNKEIKHQLLKWLKKQI.

ATP is bound at residue 11–18; that stretch reads GLEGSGKT.

This sequence belongs to the thymidylate kinase family.

The catalysed reaction is dTMP + ATP = dTDP + ADP. In terms of biological role, phosphorylation of dTMP to form dTDP in both de novo and salvage pathways of dTTP synthesis. This is Thymidylate kinase from Wigglesworthia glossinidia brevipalpis.